The following is a 1064-amino-acid chain: Serine/threonine protein kinase KIN1 (1064 aa).

The disordered stretch occupies residues 1–113; it reads MDDYHVNTAF…SSQGMPKQFH (113 aa). The span at 8-36 shows a compositional bias: polar residues; sequence TAFSMGRGNQQDDGNSESNSMHTQPSTMA. Basic and acidic residues predominate over residues 74 to 91; it reads AEQKERQVELEGKSRENA. A compositionally biased stretch (polar residues) spans 93–108; sequence KPNTTSQSRVSSSQGM. A Protein kinase domain is found at 120 to 398; the sequence is WEFVETVGAG…LKQVVEHHWM (279 aa). ATP contacts are provided by residues 126–134 and K149; that span reads VGAGSMGKV. The active-site Proton acceptor is the D269. A Phosphoserine modification is found at S534. The interval 549-621 is disordered; that stretch reads SEPEATLATK…SPTPQGNDYQ (73 aa). Positions 557–571 are enriched in polar residues; that stretch reads TKDTSVPFTPKNSDG. The residue at position 593 (S593) is a Phosphoserine. Residues 598 to 608 are compositionally biased toward basic and acidic residues; the sequence is KSSDNQRREME. Position 646 is a phosphoserine (S646). Disordered regions lie at residues 652 to 672, 694 to 714, 762 to 797, 823 to 843, and 958 to 1016; these read TIEQ…QKTH, MNEP…FPAL, EGSD…HARR, LESS…QTND, and HESI…GMTT. Positions 654–670 are enriched in polar residues; it reads EQTSVNSNNSINKPVQK. The residue at position 764 (S764) is a Phosphoserine. The span at 779-794 shows a compositional bias: basic residues; that stretch reads KGRKLHPSARAKSVGH. Polar residues-rich tracts occupy residues 832 to 843, 963 to 989, and 998 to 1016; these read DSLGNVTSQTND, RQGS…SITE, and GTSL…GMTT. The residue at position 986 (S986) is a Phosphoserine. The KA1 domain occupies 1015–1064; the sequence is TTTEKEPIKFEIHIVKVRIVGLAGVHFKKISGNTWLYKELASSILKELKL.

It belongs to the protein kinase superfamily. CAMK Ser/Thr protein kinase family. NIM1 subfamily. In terms of assembly, interacts with SEC9 and SRO7. Autophosphorylated.

The protein resides in the cytoplasm. It localises to the cell membrane. The catalysed reaction is L-seryl-[protein] + ATP = O-phospho-L-seryl-[protein] + ADP + H(+). The enzyme catalyses L-threonyl-[protein] + ATP = O-phospho-L-threonyl-[protein] + ADP + H(+). Its function is as follows. Serine/threonine protein kinase involved in the regulation of exocytosis. Induces phosphorylation of SEC9 and its release from the plasma membrane to the cytosol. In Saccharomyces cerevisiae (strain ATCC 204508 / S288c) (Baker's yeast), this protein is Serine/threonine protein kinase KIN1 (KIN1).